The primary structure comprises 237 residues: NSLVIVVGGRPCKINVHRSLVLLYNSSSLLCSGTLINQEWVLTAAHCDSKNFKMKLGVHSIKIRNKNERTRHPKEKFICPNRKKDDVLDKDIMLIRLNRPVSNSEHIAPLSLPSSPPSVGSVCYVMGWGKISSTKETYPDVPHCAKINILDHAVCRAAYTWWPATSTTLCAGILQGGKDTCEGDSGGPLICNGLQGIVSGGGNPCGQPRKPALYTKVFDYLPWIESIIAGTTTATCP.

A propeptide spanning residues N1–I5 is cleaved from the precursor. In terms of domain architecture, Peptidase S1 spans V6–A229. Intrachain disulfides connect C12/C144, C31/C47, C79/C236, C123/C191, C155/C170, and C181/C205. N25 carries N-linked (GlcNAc...) asparagine glycosylation. The O-linked (GalNAc...) serine glycan is linked to S28. Catalysis depends on charge relay system residues H46 and D91. Catalysis depends on S185, which acts as the Charge relay system.

It belongs to the peptidase S1 family. Snake venom subfamily. As to quaternary structure, monomer. Expressed by the venom gland.

The protein resides in the secreted. Inhibited by PMSF. The amidolytic activity is also inhibited by benzamidine derivatives. Snake venom serine protease that induces platelet aggregation through activation of protease-activated platelet receptors (PAR1/F2R and PAR4/F2RL3). On F2R, the cleavage occurs at Arg41-Ser42 (like thrombin cleavage), and Arg46-Asn47. In normal condition of hemostasis, the cleavage of the Arg41-Ser42 bond liberates a new N-terminus that functions as an agonist. However after envenomation, the cleavage of Arg46-Asn47 bond degrades this potential agonist. This may explain why the snake protease is less potent than thrombin in causing platelet aggregation and release reaction. On F2RL3, a thrombin-like activity has also been proven by calcium release from lung fibroblasts transfected with this receptor. Possesses amidolytic activities. The protein is Platelet-aggregating proteinase PA-BJ of Bothrops jararaca (Jararaca).